We begin with the raw amino-acid sequence, 249 residues long: Probable septum site-determining protein MinC (249 aa).

Positions 116 to 149 are disordered; the sequence is AAVSPPPPPPPPPARAEPAAPVARPAPGRMQRNA. Residues 119-130 are compositionally biased toward pro residues; that stretch reads SPPPPPPPPPAR. Positions 131–142 are enriched in low complexity; that stretch reads AEPAAPVARPAP.

Belongs to the MinC family. In terms of assembly, interacts with MinD and FtsZ.

Cell division inhibitor that blocks the formation of polar Z ring septums. Rapidly oscillates between the poles of the cell to destabilize FtsZ filaments that have formed before they mature into polar Z rings. Prevents FtsZ polymerization. The sequence is that of Probable septum site-determining protein MinC from Xanthomonas campestris pv. campestris (strain ATCC 33913 / DSM 3586 / NCPPB 528 / LMG 568 / P 25).